The sequence spans 1865 residues: Endoribonuclease Dicer (1865 aa).

One can recognise a Helicase ATP-binding domain in the interval 41 to 213 (LLEAALEHNT…DLEEKIQNLE (173 aa)). An ATP-binding site is contributed by 54–61 (LNTGSGKT). The DECH box motif lies at 161–164 (DECH). Residues 397–417 (SWSDSEDDDEDEEAEAKEKTE) are disordered. Residues 400 to 411 (DSEDDDEDEEAE) are compositionally biased toward acidic residues. Residues 419 to 588 (NFPSPFTNIL…SAECNDFELE (170 aa)) enclose the Helicase C-terminal domain. In terms of domain architecture, Dicer dsRNA-binding fold spans 616 to 708 (AIGHVNRYCA…MPVGKETVKY (93 aa)). The disordered stretch occupies residues 713–732 (DLHDEEETSVPGRPGSTKRR). The PAZ domain occupies 881-1028 (KFMEDIEKSE…LVPELCAIHP (148 aa)). 2 stretches are compositionally biased toward polar residues: residues 1111 to 1128 (GTSSDSNHTAPESCSMEV) and 1192 to 1201 (STQTTTSVSV). Disordered stretches follow at residues 1111–1142 (GTSSDSNHTAPESCSMEVSQPPEGAPNTPDEK) and 1190–1259 (DLST…DCRS). Over residues 1240–1252 (SETATSTPAPSET) the composition is skewed to low complexity. One can recognise an RNase III 1 domain in the interval 1262 to 1385 (AGPAWDSPKT…TDKWDSDENK (124 aa)). Glu1298, Asp1377, and Asp1380 together coordinate Mg(2+). The segment at 1373-1417 (KSSTDKWDSDENKDLANGKASDDEDEDDDDEPEEAEVEPSKEDVN) is disordered. Over residues 1374-1388 (SSTDKWDSDENKDLA) the composition is skewed to basic and acidic residues. A compositionally biased stretch (acidic residues) spans 1394–1409 (DDEDEDDDDEPEEAEV). Residues 1609–1767 (FLNFESKINY…LAGAIYMDSG (159 aa)) form the RNase III 2 domain. 3 residues coordinate Mg(2+): Glu1648, Asp1753, and Glu1756. The region spanning 1792–1857 (VPRSPVRELL…ARRALRSLKA (66 aa)) is the DRBM domain.

This sequence belongs to the helicase family. Dicer subfamily. In terms of assembly, component of the RISC loading complex (RLC), or micro-RNA (miRNA) loading complex (miRLC), which is composed of dicer1, ago2 and tarbp2; dicer1 and tarbp2 are required to process precursor miRNAs (pre-miRNAs) to mature miRNAs and then load them onto ago2. Note that the trimeric RLC/miRLC is also referred to as RISC. Mg(2+) serves as cofactor. It depends on Mn(2+) as a cofactor.

Its subcellular location is the cytoplasm. It carries out the reaction Endonucleolytic cleavage to 5'-phosphomonoester.. Its function is as follows. Double-stranded RNA (dsRNA) endoribonuclease playing a central role in short dsRNA-mediated post-transcriptional gene silencing. Cleaves naturally occurring long dsRNAs and short hairpin pre-microRNAs (miRNA) into fragments of twenty-one to twenty-three nucleotides with 3' overhang of two nucleotides, producing respectively short interfering RNAs (siRNA) and mature microRNAs. SiRNAs and miRNAs serve as guide to direct the RNA-induced silencing complex (RISC) to complementary RNAs to degrade them or prevent their translation. Gene silencing mediated by siRNAs, also called RNA interference, controls the elimination of transcripts from mobile and repetitive DNA elements of the genome but also the degradation of exogenous RNA of viral origin for instance. The miRNA pathway on the other side is a mean to specifically regulate the expression of target genes. This Danio rerio (Zebrafish) protein is Endoribonuclease Dicer (dicer1).